Consider the following 478-residue polypeptide: Proline--tRNA ligase (478 aa).

The protein belongs to the class-II aminoacyl-tRNA synthetase family. ProS type 3 subfamily. As to quaternary structure, homodimer.

It is found in the cytoplasm. The catalysed reaction is tRNA(Pro) + L-proline + ATP = L-prolyl-tRNA(Pro) + AMP + diphosphate. In terms of biological role, catalyzes the attachment of proline to tRNA(Pro) in a two-step reaction: proline is first activated by ATP to form Pro-AMP and then transferred to the acceptor end of tRNA(Pro). In Oceanobacillus iheyensis (strain DSM 14371 / CIP 107618 / JCM 11309 / KCTC 3954 / HTE831), this protein is Proline--tRNA ligase.